The primary structure comprises 453 residues: Protein vestigial (453 aa).

Positions 145-279 (AAGHSLHSSH…GGGLAGSGQG (135 aa)) are disordered. The segment covering 151–177 (HSSHRTHAHSLAHAHTHPHSHTHTHTH) has biased composition (basic residues). Residues 178–193 (QTKEEDLIVPRSEAEA) show a composition bias toward basic and acidic residues. 2 stretches are compositionally biased toward gly residues: residues 227-253 (HGGG…GGTG) and 267-278 (GSGGGGLAGSGQ). The interval 279-335 (GQAQYLSASCVVFTNYSGDTASQVDEHFSRALNYNNKDSKESSSPMSNRNFPPSFWN) is ser-rich sd binding domain.

In terms of assembly, the Ser-rich protein domain within the C-terminal region interacts with the C-terminus of sd to form a complex which acts as a selector for wing development. Interacts with Dhfr. Expressed in the developing wing primordia initially along the D/V wing boundary, and by the late third larval instar, maximal expression is seen in cells at the D/V wing disk boundary. Less expression is seen in cells located farther from this boundary.

The protein localises to the nucleus. In terms of biological role, involved in determining which thoracic imaginal disk cells will form wings and halteres, perhaps by interacting with other nuclear regulatory proteins. When in combination with scalloped (sd), it acts as a transcriptional activation complex that regulates gene expression in the wing. Binding to sd switches the DNA target selectivity of sd. Required and sufficient for cell proliferation at the dorsal/ventral (D/V) boundary of the wing imaginal disk. Also required for cell proliferation in the wing imaginal disk, mediated via activation of E2f. By interacting with Dhfr, may control genes involved in DNA replication. The polypeptide is Protein vestigial (vg) (Drosophila melanogaster (Fruit fly)).